The sequence spans 488 residues: Eukaryotic translation initiation factor 3 subunit L (488 aa).

Disordered stretches follow at residues 1 to 34 (MSLP…YREQ) and 427 to 449 (SEGG…HGKE). Residues 7–16 (QNRDAARRAP) show a composition bias toward basic and acidic residues. Acidic residues predominate over residues 17–27 (DDDDDAEEETM). The 195-residue stretch at 256–450 (DAIRMFSHIL…RSRLRHGKEI (195 aa)) folds into the PCI domain. Residues 431-440 (LLERRGDPQQ) are compositionally biased toward basic and acidic residues.

This sequence belongs to the eIF-3 subunit L family. In terms of assembly, component of the eukaryotic translation initiation factor 3 (eIF-3) complex.

It localises to the cytoplasm. In terms of biological role, component of the eukaryotic translation initiation factor 3 (eIF-3) complex, which is involved in protein synthesis of a specialized repertoire of mRNAs and, together with other initiation factors, stimulates binding of mRNA and methionyl-tRNAi to the 40S ribosome. The eIF-3 complex specifically targets and initiates translation of a subset of mRNAs involved in cell proliferation. In Phaeosphaeria nodorum (strain SN15 / ATCC MYA-4574 / FGSC 10173) (Glume blotch fungus), this protein is Eukaryotic translation initiation factor 3 subunit L.